The chain runs to 345 residues: Glycerol-3-phosphate dehydrogenase [NAD(P)+] (345 aa).

Residues Ser11, Trp12, Arg32, Arg33, and Lys105 each coordinate NADPH. Residues Lys105, Gly136, and Ser138 each contribute to the sn-glycerol 3-phosphate site. Ala140 is an NADPH binding site. Lys191, Asp244, Ser254, Arg255, and Asn256 together coordinate sn-glycerol 3-phosphate. The active-site Proton acceptor is Lys191. NADPH is bound at residue Arg255. Residues Val279 and Glu281 each coordinate NADPH.

Belongs to the NAD-dependent glycerol-3-phosphate dehydrogenase family.

It is found in the cytoplasm. It catalyses the reaction sn-glycerol 3-phosphate + NAD(+) = dihydroxyacetone phosphate + NADH + H(+). It carries out the reaction sn-glycerol 3-phosphate + NADP(+) = dihydroxyacetone phosphate + NADPH + H(+). Its pathway is membrane lipid metabolism; glycerophospholipid metabolism. In terms of biological role, catalyzes the reduction of the glycolytic intermediate dihydroxyacetone phosphate (DHAP) to sn-glycerol 3-phosphate (G3P), the key precursor for phospholipid synthesis. This is Glycerol-3-phosphate dehydrogenase [NAD(P)+] from Halalkalibacterium halodurans (strain ATCC BAA-125 / DSM 18197 / FERM 7344 / JCM 9153 / C-125) (Bacillus halodurans).